We begin with the raw amino-acid sequence, 293 residues long: MALVSADSRIAELLTELHQLIKQTQEERSRSEHNLVNIQKTHERMQTENKISPYYRTKLRGLYTTAKADAEAECNILRKALDKIAEIKSLLEERRIAAKIAGLYNDSEPPRKTMRRGVLMTLLQQSAMTLPLWIGKPGDKPPPLCGAIPASGDYVAKPGDKVAARVKAVEGDEQWILAEVVSYSHATNKYEVDDIDEEGKERHTLSRRRIIPLPQWKANPETDPEALFQKEQLVLALYPQTTCFYRALIHTPPQRPQDDYSVLFEDTSYADGYSPPLNVAQRYVVACKEPKKK.

The stretch at 3 to 88 forms a coiled coil; it reads LVSADSRIAE…KALDKIAEIK (86 aa). An SGF29 C-terminal domain is found at 152–293; sequence GDYVAKPGDK…VVACKEPKKK (142 aa). 2 histone H3K4me3 N-terminus binding regions span residues 194-196 and 240-243; these read DID and QTTC. A histone H3K4me3 binding region spans residues 264 to 266; sequence FED. K288 bears the N6-acetyllysine mark.

Belongs to the SGF29 family. As to quaternary structure, interacts with dimethylated and trimethylated 'Lys-4' of histone H3 (H3K4me2 and H3K4me3), with a preference for the trimethylated form (H3K4me3). Component of some SAGA-type complexes. Component of the ADA2A-containing complex (ATAC), composed of KAT14, KAT2A, TADA2L, TADA3L, ZZ3, MBIP, WDR5, YEATS2, CCDC101 and DR1. Interacts with (methylated) CGAS. Interacts with TADA3L, GCN5L2, SUPT3H and MYC. Widely expressed with highest levels in testis. Highly expressed in hepatoma and other tumor cell lines.

The protein resides in the nucleus. Chromatin reader component of some histone acetyltransferase (HAT) SAGA-type complexes like the TFTC-HAT, ATAC or STAGA complexes. SGF29 specifically recognizes and binds methylated 'Lys-4' of histone H3 (H3K4me), with a preference for trimethylated form (H3K4me3). In the SAGA-type complexes, SGF29 is required to recruit complexes to H3K4me. Involved in the response to endoplasmic reticulum (ER) stress by recruiting the SAGA complex to H3K4me, thereby promoting histone H3 acetylation and cell survival. Also binds non-histone proteins that are methylated on Lys residues: specifically recognizes and binds CGAS monomethylated on 'Lys-491'. May be involved in MYC-mediated oncogenic transformation. This Rattus norvegicus (Rat) protein is SAGA-associated factor 29.